Reading from the N-terminus, the 479-residue chain is 6-phosphogluconate dehydrogenase, decarboxylating (479 aa).

NADP(+) is bound by residues 10–15, 33–35, 75–77, and Asn103; these read GLAVMG, NRS, and IKA. Substrate contacts are provided by residues Asn103 and 129–131; that span reads SGG. Lys183 acts as the Proton acceptor in catalysis. 186–187 is a binding site for substrate; it reads HN. Glu190 (proton donor) is an active-site residue. Substrate contacts are provided by Tyr191, Lys260, Arg287, Arg447, and His453.

This sequence belongs to the 6-phosphogluconate dehydrogenase family. Homodimer.

The catalysed reaction is 6-phospho-D-gluconate + NADP(+) = D-ribulose 5-phosphate + CO2 + NADPH. Its pathway is carbohydrate degradation; pentose phosphate pathway; D-ribulose 5-phosphate from D-glucose 6-phosphate (oxidative stage): step 3/3. Functionally, catalyzes the oxidative decarboxylation of 6-phosphogluconate to ribulose 5-phosphate and CO(2), with concomitant reduction of NADP to NADPH. In Chlamydia muridarum (strain MoPn / Nigg), this protein is 6-phosphogluconate dehydrogenase, decarboxylating (gnd).